The sequence spans 130 residues: Small ribosomal subunit protein uS11 (130 aa).

It belongs to the universal ribosomal protein uS11 family. Part of the 30S ribosomal subunit. Interacts with proteins S7 and S18. Binds to IF-3.

Its function is as follows. Located on the platform of the 30S subunit, it bridges several disparate RNA helices of the 16S rRNA. Forms part of the Shine-Dalgarno cleft in the 70S ribosome. The polypeptide is Small ribosomal subunit protein uS11 (Thermoanaerobacter sp. (strain X514)).